Consider the following 241-residue polypeptide: Terpene cyclase olcD (241 aa).

The next 7 membrane-spanning stretches (helical) occupy residues 19–39, 49–71, 76–95, 108–128, 137–157, 166–186, and 202–222; these read LSDI…FATI, WMPL…LYPP, ILGF…LRFA, YLPV…LALI, FYYG…SGLV, SYTI…GLFF, and LMRW…VQFW.

This sequence belongs to the paxB family.

It localises to the membrane. Its pathway is secondary metabolite biosynthesis; terpenoid biosynthesis. Terpene cyclase; part of the gene cluster that mediates the biosynthesis of 15-deoxyoxalicine B. The first step of the pathway is the synthesis of nicotinyl-CoA from nicotinic acid by the nicotinic acid-CoA ligase olcI. Nicotinyl-CoA is then a substrate of polyketide synthase olcA to produce 4-hydroxy-6-(3-pyridinyl)-2H-pyran-2-one (HPPO) which is further prenylated by the polyprenyl transferase olcH to yield geranylgeranyl-HPPO. Geranylgeranyl pyrophosphate is provided by the cluster-specific geranylgeranyl pyrophosphate synthase olcC. The FAD-dependent monooxygenase olcE catalyzes the epoxidation of geranylgeranyl-HPPO and the terpene cyclase olcD catalyzes the cyclization of the terpenoid component, resulting in the formation of the tricyclic terpene moiety seen in predecaturin E. The cytochrome P450 monooxygenase then catalyzes the allylic oxidation of predecaturin E, which is followed by spirocylization with concomitant loss of one molecule of water to form decaturin E. Decaturin E is the substrate of the cytochrome P450 monooxygenase olcJ which hydroxylates it at the C-29 position to form decaturin F. The short-chain dehydrogenase/reductase olcF may catalyze the oxidation of decaturin F to generate the 29-hydroxyl-27-one intermediate, and subsequent hemiacetal formation probably leads to the formation of decaturin C. The dioxygenase olcK may be a peroxisomal enzyme that catalyzes the hydroxylation of decaturin C into decaturin A once decaturin C is shuttled into the peroxisome by the MFS transporter olcL. Finally the cytochrome P450 monooxygenase olcB catalyzes the oxidative rearrangement to yield 15-deoxyoxalicine B. In the absence of olcJ, decaturin E may be shunted to a pathway in which it is oxidized to a ketone, possibly by olcF, to form decaturin D, which undergoes further allylic oxidation to yield decaturin G. Moreover, in the absence of oclK or oclL, oclB can convert decaturin C into 15-deoxyoxalicine A. This chain is Terpene cyclase olcD, found in Penicillium canescens.